The sequence spans 415 residues: Light-independent protochlorophyllide reductase subunit N (415 aa).

C16, C41, and C98 together coordinate [4Fe-4S] cluster.

It belongs to the BchN/ChlN family. As to quaternary structure, protochlorophyllide reductase is composed of three subunits; BchL, BchN and BchB. Forms a heterotetramer of two BchB and two BchN subunits. [4Fe-4S] cluster is required as a cofactor.

The enzyme catalyses chlorophyllide a + oxidized 2[4Fe-4S]-[ferredoxin] + 2 ADP + 2 phosphate = protochlorophyllide a + reduced 2[4Fe-4S]-[ferredoxin] + 2 ATP + 2 H2O. It participates in porphyrin-containing compound metabolism; bacteriochlorophyll biosynthesis (light-independent). Its function is as follows. Component of the dark-operative protochlorophyllide reductase (DPOR) that uses Mg-ATP and reduced ferredoxin to reduce ring D of protochlorophyllide (Pchlide) to form chlorophyllide a (Chlide). This reaction is light-independent. The NB-protein (BchN-BchB) is the catalytic component of the complex. This Roseiflexus sp. (strain RS-1) protein is Light-independent protochlorophyllide reductase subunit N.